Consider the following 143-residue polypeptide: uncharacterized protein (143 aa).

A run of 4 helical transmembrane segments spans residues 7-29, 52-74, 87-105, and 120-142; these read LFLF…LSLV, FSLY…NTYL, LGVF…LWAG, and WLGI…IRLG.

Its subcellular location is the cell membrane. This is an uncharacterized protein from Aquifex aeolicus (strain VF5).